Consider the following 3068-residue polypeptide: Highly reducing polyketide synthase 17 (3068 aa).

Residues 100–526 (IEPIAIVGAS…GTNAHAIMER (427 aa)) form the Ketosynthase family 3 (KS3) domain. Active-site for beta-ketoacyl synthase activity residues include C274, H410, and H449. Residues 627–938 (YVFTGQGAQW…LAGPIRQCLA (312 aa)) are malonyl-CoA:ACP transacylase (MAT) domain. The For malonyltransferase activity role is filled by S721. Residues 1027–1160 (HHLLGVRMTE…GVVEGVMTLD (134 aa)) are N-terminal hotdog fold. The dehydratase (DH) domain stretch occupies residues 1027-1311 (HHLLGVRMTE…RASNIDMTIV (285 aa)). In terms of domain architecture, PKS/mFAS DH spans 1027–1334 (HHLLGVRMTE…SRSLAAHVDG (308 aa)). H1059 (proton acceptor; for dehydratase activity) is an active-site residue. A C-terminal hotdog fold region spans residues 1179-1334 (NRTMVIPEEL…SRSLAAHVDG (156 aa)). The active-site Proton donor; for dehydratase activity is D1247. The interval 1735–2037 (LGPVQSSKGD…LVRQGGKVIL (303 aa)) is enoylreductase (ER) domain. The segment at 2062–2240 (AAYVVAGGMG…FLSMNIGWIE (179 aa)) is catalytic ketoreductase (KR) domain. The Carrier domain maps to 2345-2423 (TIIDFISSAI…DLAEKVASRS (79 aa)). The residue at position 2383 (S2383) is an O-(pantetheine 4'-phosphoryl)serine. Residues 2831–3062 (FDVASLGLRS…SCMITSLLED (232 aa)) form a choline/carnitine acyltransferase (cAT) domain region.

It functions in the pathway secondary metabolite biosynthesis. Highly reducing polyketide synthase; part of the gene cluster that mediates the biosynthesis of (2Z,4E,6E,10E)-9-hydroxydodeca-2,4,6,10-tetraenoic acid (BAA), (2E,4E,6E,10E)-9-hydroxydodeca-2,4,6,10-tetraenoic acid (BAB), and (2Z,4E,6E)-octa-2,4,6-trienedioic acid (PBA). The highly reducing polyketide synthase Ba17a is sufficent to produce PBA and BAA. The still to be characterized protein Ba17b leads to an increased production of BAA as well as to the production of the new compound BAB. BAA does not possess insecticidal activity against G.mellonella larvae, however, both BAA and BAB increase the growth of Candida albicans and BAA can mitigate the fungicidal effects of fluconazole over C.albicans, suggesting that generalist pathogens such as M.anisopliae, can potentially manipulate the yeast microbiota found in arthropods (and anywhere else) by the activity of compounds as BAA and BAB. The protein is Highly reducing polyketide synthase 17 of Metarhizium anisopliae (Entomophthora anisopliae).